Consider the following 491-residue polypeptide: Cobyric acid synthase (491 aa).

One can recognise a GATase cobBQ-type domain in the interval 250–437 (QLRVVVPVLP…VHGVFDHPQA (188 aa)). The active-site Nucleophile is Cys-331. His-429 is an active-site residue.

This sequence belongs to the CobB/CobQ family. CobQ subfamily.

It functions in the pathway cofactor biosynthesis; adenosylcobalamin biosynthesis. In terms of biological role, catalyzes amidations at positions B, D, E, and G on adenosylcobyrinic A,C-diamide. NH(2) groups are provided by glutamine, and one molecule of ATP is hydrogenolyzed for each amidation. In Xanthomonas axonopodis pv. citri (strain 306), this protein is Cobyric acid synthase.